Here is a 337-residue protein sequence, read N- to C-terminus: Tetraacyldisaccharide 4'-kinase (337 aa).

An ATP-binding site is contributed by 56–63 (VAGGAGKT).

It belongs to the LpxK family.

It catalyses the reaction a lipid A disaccharide + ATP = a lipid IVA + ADP + H(+). Its pathway is glycolipid biosynthesis; lipid IV(A) biosynthesis; lipid IV(A) from (3R)-3-hydroxytetradecanoyl-[acyl-carrier-protein] and UDP-N-acetyl-alpha-D-glucosamine: step 6/6. In terms of biological role, transfers the gamma-phosphate of ATP to the 4'-position of a tetraacyldisaccharide 1-phosphate intermediate (termed DS-1-P) to form tetraacyldisaccharide 1,4'-bis-phosphate (lipid IVA). The sequence is that of Tetraacyldisaccharide 4'-kinase from Rhodospirillum centenum (strain ATCC 51521 / SW).